The sequence spans 251 residues: Flap endonuclease Xni (251 aa).

A Mg(2+)-binding site is contributed by D104. Positions 160 to 248 (VSPQQLSDYW…ALTGNLQQLR (89 aa)) constitute a 5'-3' exonuclease domain. L171, A172, P180, V182, and I185 together coordinate K(+). Residues 184–189 (GIGPKT) form an interaction with DNA region.

It belongs to the Xni family. Mg(2+) is required as a cofactor. The cofactor is K(+).

Its function is as follows. Has flap endonuclease activity. During DNA replication, flap endonucleases cleave the 5'-overhanging flap structure that is generated by displacement synthesis when DNA polymerase encounters the 5'-end of a downstream Okazaki fragment. This is Flap endonuclease Xni from Serratia proteamaculans (strain 568).